The sequence spans 445 residues: rRNA methyltransferase 3B, mitochondrial (445 aa).

Residues 1 to 37 (MATRIASMRFRCALFQSALTLGRNEVNIKRYVRRRRA) constitute a mitochondrion transit peptide. 2 disordered regions span residues 52-90 (EGVI…SQPV) and 311-334 (HSTT…SDYG). 3 stretches are compositionally biased toward polar residues: residues 54 to 70 (VISQ…NDIT), 78 to 90 (IENP…SQPV), and 311 to 324 (HSTT…NTTP). S-adenosyl-L-methionine is bound by residues Gly387, Ile411, and Leu420.

Belongs to the class IV-like SAM-binding methyltransferase superfamily. RNA methyltransferase TrmH family.

Its subcellular location is the mitochondrion. The catalysed reaction is a uridine in rRNA + S-adenosyl-L-methionine = a 2'-O-methyluridine in rRNA + S-adenosyl-L-homocysteine + H(+). S-adenosyl-L-methionine-dependent 2'-O-ribose methyltransferase that catalyzes the formation of 2'-O-methylguanosine at position 1485 (Gm1485) in the mitochondrial large subunit ribosomal RNA (mtLSU rRNA), a conserved modification in the peptidyl transferase domain of the mtLSU rRNA. Also required for formation of 2'-O-methyluridine at position 1484 (Um1484) mediated by MRM2. This is rRNA methyltransferase 3B, mitochondrial from Danio rerio (Zebrafish).